Here is a 612-residue protein sequence, read N- to C-terminus: Amyloid-beta precursor-like protein (612 aa).

An N-terminal signal peptide occupies residues 1 to 21 (MGPSVRPGFLVVVIGLQFVAA). Over 22–542 (SMEVNSRKFE…NLYANSHANS (521 aa)) the chain is Extracellular. The tract at residues 28–122 (RKFEPMVAFI…PFRCLVGPFQ (95 aa)) is GFLD subdomain. Residues 28–189 (RKFEPMVAFI…SGVEFVCCPK (162 aa)) enclose the E1 domain. 6 cysteine pairs are disulfide-bonded: cysteine 38–cysteine 60, cysteine 71–cysteine 116, cysteine 96–cysteine 103, cysteine 132–cysteine 187, cysteine 143–cysteine 173, and cysteine 157–cysteine 186. 3 N-linked (GlcNAc...) asparagine glycosylation sites follow: asparagine 99, asparagine 108, and asparagine 150. The cuBD subdomain stretch occupies residues 130–189 (EHCIFDHYHDPRVCNEFDQCNETAMSKCSARGMTTQSFAMLWPCQEPGHFSGVEFVCCPK). The region spanning 223-419 (GDSKYMSKYA…KQVRPNIDKF (197 aa)) is the E2 domain. Disordered regions lie at residues 251–276 (ERDT…TDPK) and 437–490 (QEPT…FDSE). 2 stretches are compositionally biased toward basic and acidic residues: residues 439–453 (PTPK…KAED) and 470–483 (KPTE…EDIK). A helical transmembrane segment spans residues 543-563 (VLGIAIGGVVVFIIIVVAVVM). At 564–612 (LKRRTQRQRVTHGFVEVDPAASPEERHVANMQMSGYENPTYKYFEMQNQ) the chain is on the cytoplasmic side. The interval 598-612 (GYENPTYKYFEMQNQ) is required for the interaction with kinesin heavy chain and for anterograde transport in axons. The YENPXY motif motif lies at 599–604 (YENPTY).

The protein belongs to the APP family. As to quaternary structure, interacts (via cytoplasmic domain) with kinesin heavy chain. Expressed in the cervicothoracic ganglion (stellate ganglion) (at protein level).

It is found in the cell membrane. The protein localises to the cell projection. Its subcellular location is the axon. Acts as a kinesin I membrane receptor, thereby playing a role in axonal anterograde transport of cargo towards synapses in axons. The sequence is that of Amyloid-beta precursor-like protein from Doryteuthis pealeii (Longfin inshore squid).